The primary structure comprises 114 residues: Ribonuclease P protein component (114 aa).

The protein belongs to the RnpA family. In terms of assembly, consists of a catalytic RNA component (M1 or rnpB) and a protein subunit.

The catalysed reaction is Endonucleolytic cleavage of RNA, removing 5'-extranucleotides from tRNA precursor.. In terms of biological role, RNaseP catalyzes the removal of the 5'-leader sequence from pre-tRNA to produce the mature 5'-terminus. It can also cleave other RNA substrates such as 4.5S RNA. The protein component plays an auxiliary but essential role in vivo by binding to the 5'-leader sequence and broadening the substrate specificity of the ribozyme. This chain is Ribonuclease P protein component, found in Staphylococcus haemolyticus (strain JCSC1435).